The primary structure comprises 508 residues: Putative adenosylhomocysteinase 3 (508 aa).

Ser-4 is modified (phosphoserine). A disordered region spans residues 24–81; that stretch reads DQKQEFNKRPTKIGRRSLSRSISQSSTDSYSSAASYTDSSDDETSPRDKQQKNSKGSS. Basic residues predominate over residues 32–41; the sequence is RPTKIGRRSL. Positions 42-61 are enriched in low complexity; the sequence is SRSISQSSTDSYSSAASYTD. Residues Ser-46, Ser-49, Ser-52, and Ser-55 each carry the phosphoserine modification. 3 residues coordinate substrate: Thr-133, Asp-207, and Glu-232. 233 to 235 provides a ligand contact to NAD(+); the sequence is SVT. 2 residues coordinate substrate: Lys-262 and Asp-266. NAD(+)-binding positions include Asn-267, 298-303, Glu-319, Asn-354, 375-377, and Asn-422; these read GEVGKG and IGH.

This sequence belongs to the adenosylhomocysteinase family. Homotetramer. Forms heteromultimers with AHCYL1 (via the C-terminal region). Interacts with ITPR1; with lower affinity than AHCYL1 and maybe via ITPR1. Interacts with SLC4A4. Interacts with ZCCHC4. NAD(+) is required as a cofactor.

It localises to the cytoplasm. It is found in the microsome. It catalyses the reaction S-adenosyl-L-homocysteine + H2O = L-homocysteine + adenosine. The protein operates within amino-acid biosynthesis; L-homocysteine biosynthesis; L-homocysteine from S-adenosyl-L-homocysteine: step 1/1. Functionally, may regulate the electrogenic sodium/bicarbonate cotransporter SLC4A4 activity and Mg(2+)-sensitivity. On the contrary of its homolog AHCYL1, does not regulate ITPR1 sensitivity to inositol 1,4,5-trisphosphate. The sequence is that of Putative adenosylhomocysteinase 3 (AHCYL2) from Pongo abelii (Sumatran orangutan).